The chain runs to 329 residues: Glucokinase (329 aa).

ATP is bound at residue 13–18 (GDIGGT).

Belongs to the bacterial glucokinase family.

Its subcellular location is the cytoplasm. It carries out the reaction D-glucose + ATP = D-glucose 6-phosphate + ADP + H(+). This chain is Glucokinase, found in Caulobacter sp. (strain K31).